The following is a 412-amino-acid chain: CCA-adding enzyme (412 aa).

Ser41 and Lys44 together coordinate ATP. Positions 41 and 44 each coordinate CTP. 3 residues coordinate Mg(2+): Asp53, Asp55, and Asp106. The ATP site is built by His129, Lys149, and Tyr158. CTP contacts are provided by His129, Lys149, and Tyr158.

Belongs to the tRNA nucleotidyltransferase/poly(A) polymerase family. Archaeal CCA-adding enzyme subfamily. In terms of assembly, homodimer. Forms a tetramer upon binding two tRNAs. However, tRNA-induced tetramer formation is not required for CCA addition. Mg(2+) is required as a cofactor.

The enzyme catalyses a tRNA precursor + 2 CTP + ATP = a tRNA with a 3' CCA end + 3 diphosphate. The catalysed reaction is a tRNA with a 3' CCA end + 2 CTP + ATP = a tRNA with a 3' CCACCA end + 3 diphosphate. Its function is as follows. Catalyzes the addition and repair of the essential 3'-terminal CCA sequence in tRNAs without using a nucleic acid template. Adds these three nucleotides in the order of C, C, and A to the tRNA nucleotide-73, using CTP and ATP as substrates and producing inorganic pyrophosphate. tRNA 3'-terminal CCA addition is required both for tRNA processing and repair. Also involved in tRNA surveillance by mediating tandem CCA addition to generate a CCACCA at the 3' terminus of unstable tRNAs. While stable tRNAs receive only 3'-terminal CCA, unstable tRNAs are marked with CCACCA and rapidly degraded. The structural flexibility of RNA controls the choice between CCA versus CCACCA addition: following the first CCA addition cycle, nucleotide-binding to the active site triggers a clockwise screw motion, producing torque on the RNA. This ejects stable RNAs, whereas unstable RNAs are refolded while bound to the enzyme and subjected to a second CCA catalytic cycle. The polypeptide is CCA-adding enzyme (Saccharolobus shibatae (strain ATCC 51178 / DSM 5389 / JCM 8931 / NBRC 15437 / B12) (Sulfolobus shibatae)).